The following is a 447-amino-acid chain: Mannose/glucose-specific lectin (447 aa).

3 tandem repeats follow at residues 1 to 149 (SLKG…VQPV), 150 to 295 (PHGT…VKPR), and 296 to 447 (DVEG…DTAV). The interval 1-447 (SLKGMISVGP…GIFVKPDTAV (447 aa)) is 3 X approximate tandem repeats. Jacalin-type lectin domains are found at residues 5-148 (MISV…FVQP), 153-294 (TISF…YVKP), and 300-443 (SISI…FVKP).

This sequence belongs to the jacalin lectin family. In terms of assembly, homodimer. Post-translationally, the N-terminus is blocked.

Functionally, mannose/glucose specific lectin. Shows agglutinating activity against rabbit erythrocytes. This chain is Mannose/glucose-specific lectin, found in Parkia platycephala.